We begin with the raw amino-acid sequence, 295 residues long: Small ribosomal subunit protein uS2 (295 aa).

Residue S2 is modified to N-acetylserine. S43 carries the phosphoserine modification. K52 is subject to N6-acetyllysine. The tract at residues 54 to 113 is interaction with PPP1R16B; sequence TWEKLLLAARAIVAIENPADVSVISSRNTGQRAVLKFAAATGATPIAGRFTPGTFTNQIQ. An N6-acetyllysine; alternate modification is found at K89. A Glycyl lysine isopeptide (Lys-Gly) (interchain with G-Cter in SUMO2); alternate cross-link involves residue K89. Residue T97 is modified to Phosphothreonine. Laminin-binding regions lie at residues 161-180 and 205-229; these read IPCN…MLAR and RDPE…EFQG. [DE]-W-[ST] repeat units follow at residues 230–232, 247–249, 266–268, 275–277, and 293–295; these read EWT, DWS, and EWS. Residues 242–295 form a laminin-binding region; it reads QPEVADWSEGVQVPSVPIQQFPTEDWSAQPATEDWSAAPTAQATEWVGTTTEWS. The tract at residues 266 to 295 is disordered; it reads DWSAQPATEDWSAAPTAQATEWVGTTTEWS. The segment covering 280 to 295 has biased composition (polar residues); the sequence is PTAQATEWVGTTTEWS.

This sequence belongs to the universal ribosomal protein uS2 family. In terms of assembly, monomer (37LRP) and homodimer (67LR). Component of the small ribosomal subunit. Mature ribosomes consist of a small (40S) and a large (60S) subunit. The 40S subunit contains about 33 different proteins and 1 molecule of RNA (18S). The 60S subunit contains about 49 different proteins and 3 molecules of RNA (28S, 5.8S and 5S). Interacts with RPS21. Interacts with several laminins including at least LAMB1. Interacts with MDK. The mature dimeric form interacts with PPP1R16B (via its fourth ankyrin repeat). Interacts with PPP1CA only in the presence of PPP1R16B. Acylated. Acylation may be a prerequisite for conversion of the monomeric 37 kDa laminin receptor precursor (37LRP) to the mature dimeric 67 kDa laminin receptor (67LR), and may provide a mechanism for membrane association. Post-translationally, cleaved by stromelysin-3 (ST3) at the cell surface. Cleavage by stromelysin-3 may be a mechanism to alter cell-extracellular matrix interactions.

The protein resides in the cell membrane. Its subcellular location is the cytoplasm. The protein localises to the nucleus. In terms of biological role, required for the assembly and/or stability of the 40S ribosomal subunit. Required for the processing of the 20S rRNA-precursor to mature 18S rRNA in a late step of the maturation of 40S ribosomal subunits. Also functions as a cell surface receptor for laminin. Plays a role in cell adhesion to the basement membrane and in the consequent activation of signaling transduction pathways. May play a role in cell fate determination and tissue morphogenesis. Also acts as a receptor for several other ligands, including the pathogenic prion protein, viruses, and bacteria. Acts as a PPP1R16B-dependent substrate of PPP1CA. The sequence is that of Small ribosomal subunit protein uS2 from Oryctolagus cuniculus (Rabbit).